We begin with the raw amino-acid sequence, 284 residues long: Rhomboid-type serine protease 2 (284 aa).

6 helical membrane passes run 17 to 37, 66 to 86, 98 to 118, 124 to 141, 160 to 180, and 182 to 202; these read PPAL…IKSV, FHVN…PLAV, VTLN…GLIF, VIGL…MAYH, IKLY…ILFP, and SSLP…YGYI. Catalysis depends on serine 128, which acts as the Nucleophile. Histidine 187 is an active-site residue.

Belongs to the peptidase S54 family.

The protein resides in the golgi apparatus membrane. The protein localises to the golgi apparatus. It is found in the cis-Golgi network membrane. It catalyses the reaction Cleaves type-1 transmembrane domains using a catalytic dyad composed of serine and histidine that are contributed by different transmembrane domains.. Functionally, probable rhomboid-type serine protease that catalyzes intramembrane proteolysis. The polypeptide is Rhomboid-type serine protease 2 (RBD2) (Candida albicans (strain SC5314 / ATCC MYA-2876) (Yeast)).